Reading from the N-terminus, the 107-residue chain is Large ribosomal subunit protein bL21 (107 aa).

Belongs to the bacterial ribosomal protein bL21 family. Part of the 50S ribosomal subunit. Contacts protein L20.

Functionally, this protein binds to 23S rRNA in the presence of protein L20. The polypeptide is Large ribosomal subunit protein bL21 (Chlamydia muridarum (strain MoPn / Nigg)).